Consider the following 591-residue polypeptide: L-fucose isomerase (591 aa).

Catalysis depends on proton acceptor residues Glu-337 and Asp-361. Residues Glu-337, Asp-361, and His-528 each coordinate Mn(2+).

The protein belongs to the L-fucose isomerase family. In terms of assembly, homohexamer. It depends on Mn(2+) as a cofactor.

Its subcellular location is the cytoplasm. The enzyme catalyses L-fucose = L-fuculose. It catalyses the reaction D-arabinose = D-ribulose. The catalysed reaction is L-xylopyranose = L-xylulose. Its pathway is carbohydrate degradation; L-fucose degradation; L-lactaldehyde and glycerone phosphate from L-fucose: step 1/3. With respect to regulation, inhibited by ribitol, L-arabitol and dulcitol. Isomerization of L-xylulose to L-xylose is inhibited by xylitol. Functionally, converts the aldose L-fucose into the corresponding ketose L-fuculose. Also converts D-arabinose into D-ribulose. In addition, catalyzes the isomerization of L-xylulose to L-xylose. The chain is L-fucose isomerase from Escherichia coli (strain K12).